A 550-amino-acid chain; its full sequence is CTP synthase (550 aa).

The interval 1–270 is amidoligase domain; the sequence is MTKFVFVTGG…DRLICEELRL (270 aa). Ser13 lines the CTP pocket. Ser13 lines the UTP pocket. ATP is bound by residues 14–19 and Asp71; that span reads SLGKGI. Mg(2+) contacts are provided by Asp71 and Glu144. CTP is bound by residues 151–153, 191–196, and Lys227; these read DIE and KTKPTQ. UTP-binding positions include 191–196 and Lys227; that span reads KTKPTQ. One can recognise a Glutamine amidotransferase type-1 domain in the interval 295–547; sequence TIGMVGKYVD…VEAALASQQR (253 aa). Gly356 contacts L-glutamine. The active-site Nucleophile; for glutamine hydrolysis is Cys383. L-glutamine-binding positions include 384–387, Glu407, and Arg473; that span reads LGMQ. Residues His520 and Glu522 contribute to the active site.

Belongs to the CTP synthase family. In terms of assembly, homotetramer.

The catalysed reaction is UTP + L-glutamine + ATP + H2O = CTP + L-glutamate + ADP + phosphate + 2 H(+). It catalyses the reaction L-glutamine + H2O = L-glutamate + NH4(+). It carries out the reaction UTP + NH4(+) + ATP = CTP + ADP + phosphate + 2 H(+). Its pathway is pyrimidine metabolism; CTP biosynthesis via de novo pathway; CTP from UDP: step 2/2. With respect to regulation, allosterically activated by GTP, when glutamine is the substrate; GTP has no effect on the reaction when ammonia is the substrate. The allosteric effector GTP functions by stabilizing the protein conformation that binds the tetrahedral intermediate(s) formed during glutamine hydrolysis. Inhibited by the product CTP, via allosteric rather than competitive inhibition. Functionally, catalyzes the ATP-dependent amination of UTP to CTP with either L-glutamine or ammonia as the source of nitrogen. Regulates intracellular CTP levels through interactions with the four ribonucleotide triphosphates. This Cupriavidus taiwanensis (strain DSM 17343 / BCRC 17206 / CCUG 44338 / CIP 107171 / LMG 19424 / R1) (Ralstonia taiwanensis (strain LMG 19424)) protein is CTP synthase.